The following is a 1125-amino-acid chain: Probable phospholipid-transporting ATPase IIB (1125 aa).

The Cytoplasmic portion of the chain corresponds to 1–131 (MADGIPLNPV…IKNQKYNIVT (131 aa)). Residues 132–152 (FVPGVLYQQFKFFLNLYFLVV) form a helical membrane-spanning segment. The Extracellular segment spans residues 153 to 161 (ACSQFVPSL). A helical membrane pass occupies residues 162 to 182 (KIGYLYTYWAPLGFVLAVTMV). Over 183 to 369 (REAVDEVRRC…LDLELNRLTK (187 aa)) the chain is Cytoplasmic. The chain crosses the membrane as a helical span at residues 370-390 (ALFLAQVVLSVVMVALQGFLG). The Extracellular segment spans residues 391 to 395 (PWFRN). A helical transmembrane segment spans residues 396 to 415 (LFRFVVLFSYIIPISLRVNL). Topologically, residues 416–928 (DMGKSAYGWM…ALGQFVMHRG (513 aa)) are cytoplasmic. The active-site 4-aspartylphosphate intermediate is the aspartate 455. Residues aspartate 455, lysine 456, and threonine 457 each contribute to the ATP site. Aspartate 455 contributes to the Mg(2+) binding site. Threonine 457 provides a ligand contact to Mg(2+). Positions 500 to 511 (QSNGSSASSTPS) are enriched in low complexity. 2 disordered regions span residues 500-525 (QSNGSSASSTPSRKPQPPAPKVRKSV) and 552-574 (GANAEPESTEADQDFSDDNRTYQ). A compositionally biased stretch (acidic residues) spans 558–567 (ESTEADQDFS). Glutamate 580, phenylalanine 622, lysine 627, lysine 646, arginine 675, threonine 676, threonine 755, glycine 756, aspartate 757, arginine 837, and lysine 843 together coordinate ATP. Position 863 (aspartate 863) interacts with Mg(2+). The ATP site is built by asparagine 866 and aspartate 867. Aspartate 867 lines the Mg(2+) pocket. The helical transmembrane segment at 929 to 949 (MIISTMQAVFSSIFYFASVPL) threads the bilayer. Residues 950–951 (YQ) are Extracellular-facing. A helical transmembrane segment spans residues 952 to 972 (GFLMVGYATIYTMFPVFSLVL). Over 973-1001 (DQDVKPEMALLYPELYKDLTKGRSLSFKT) the chain is Cytoplasmic. A helical membrane pass occupies residues 1002–1022 (FLIWVLISIYQGGILMYGALV). At 1023-1030 (LFDQEFVH) the chain is on the extracellular side. A helical transmembrane segment spans residues 1031-1051 (VVAISFTALILTELLMVALTI). Over 1052–1055 (RTWH) the chain is Cytoplasmic. A helical transmembrane segment spans residues 1056–1076 (WLMVVAQLISLACYLASLAFL). Residues 1077-1088 (NEYFDLSFITTR) lie on the Extracellular side of the membrane. Residues 1089–1109 (VFLWKVCVITLVSCLPLYIIK) form a helical membrane-spanning segment. Over 1110 to 1125 (YLKRKFSPPSYSKLSS) the chain is Cytoplasmic.

It belongs to the cation transport ATPase (P-type) (TC 3.A.3) family. Type IV subfamily. Mg(2+) is required as a cofactor.

Its subcellular location is the golgi apparatus. It localises to the trans-Golgi network membrane. It carries out the reaction ATP + H2O + phospholipidSide 1 = ADP + phosphate + phospholipidSide 2.. The protein is Probable phospholipid-transporting ATPase IIB (atp9b) of Danio rerio (Zebrafish).